Reading from the N-terminus, the 296-residue chain is Xyloglucan endotransglucosylase/hydrolase 1 (296 aa).

An N-terminal signal peptide occupies residues 1–23 (MGSSSSMWTVCVILASLASAALC). Positions 24–222 (ANPRRPVDVQ…WSKAPFIAAY (199 aa)) constitute a GH16 domain. Residue glutamate 108 is the Nucleophile of the active site. The active-site Proton donor is glutamate 112. Glutamate 112 contributes to the xyloglucan binding site. The N-linked (GlcNAc...) asparagine glycan is linked to asparagine 116. Xyloglucan is bound by residues 125-127 (QTN), 135-137 (DRE), 201-202 (DW), and glycine 206. 2 disulfides stabilise this stretch: cysteine 230-cysteine 239 and cysteine 276-cysteine 290. Position 281 (arginine 281) interacts with xyloglucan.

This sequence belongs to the glycosyl hydrolase 16 family. XTH group 1 subfamily. Contains at least one intrachain disulfide bond essential for its enzymatic activity. Post-translationally, N-glycosylated; not essential for its enzymatic activity.

It localises to the secreted. Its subcellular location is the cell wall. It is found in the extracellular space. The protein localises to the apoplast. It carries out the reaction breaks a beta-(1-&gt;4) bond in the backbone of a xyloglucan and transfers the xyloglucanyl segment on to O-4 of the non-reducing terminal glucose residue of an acceptor, which can be a xyloglucan or an oligosaccharide of xyloglucan.. In terms of biological role, catalyzes xyloglucan endohydrolysis (XEH) and/or endotransglycosylation (XET). Cleaves and religates xyloglucan polymers, an essential constituent of the primary cell wall, and thereby participates in cell wall construction of growing tissues. In Glycine max (Soybean), this protein is Xyloglucan endotransglucosylase/hydrolase 1.